Reading from the N-terminus, the 317-residue chain is Protease 7 (317 aa).

The N-terminal stretch at 1 to 20 (MRAKLLGIVLTTPIAISSFA) is a signal peptide. At 21-31 (STETLSFTPDN) the chain is on the periplasmic side. A beta stranded membrane pass occupies residues 32 to 41 (INADISLGTL). At 42–69 (SGKTKERVYLAEEGGRKVSQLDWKFNNA) the chain is on the extracellular side. The chain crosses the membrane as a beta stranded span at residues 70–78 (AIIKGAINW). Over 79-83 (DLMPQ) the chain is Periplasmic. Residues 84–92 (ISIGAAGWT) traverse the membrane as a beta stranded segment. The Extracellular segment spans residues 93 to 130 (TLGSRGGNMVDQDWMDSSNPGTWTDESRHPDTQLNYAN). Catalysis depends on residues Asp103 and Asp105. The chain crosses the membrane as a beta stranded span at residues 131–140 (EFDLNIKGWL). Residues 141 to 145 (LNEPN) are Periplasmic-facing. A beta stranded membrane pass occupies residues 146 to 156 (YRLGLMAGYQE). Over 157-197 (SRYSFTARGGSYIYSSEEGFRDDIGSFPNGERAIGYKQRFK) the chain is Extracellular. The chain crosses the membrane as a beta stranded span at residues 198-209 (MPYIGLTGSYRY). The Periplasmic portion of the chain corresponds to 210-211 (ED). The beta stranded transmembrane segment at 212-221 (FELGGTFKYS) threads the bilayer. Residues 222-250 (GWVEASDNDEHYDPGKRITYRSKVKDQNY) are Extracellular-facing. Catalysis depends on residues Asp230 and His232. A beta stranded transmembrane segment spans residues 251–261 (YSVSVNAGYYV). Residues 262-264 (TPN) lie on the Periplasmic side of the membrane. A beta stranded transmembrane segment spans residues 265 to 274 (AKVYVEGTWN). The Extracellular portion of the chain corresponds to 275–306 (RVTNKKGNTSLYDHNDNTSDYSKNGAGIENYN). The chain crosses the membrane as a beta stranded span at residues 307–316 (FITTAGLKYT). Phe317 is a topological domain (periplasmic).

Belongs to the peptidase A26 family. Homopentamer.

The protein resides in the cell outer membrane. The enzyme catalyses Has a virtual requirement for Arg in the P1 position and a slightly less stringent preference for this residue in the P1' position, which can also contain Lys, Gly or Val.. Its activity is regulated as follows. Inhibited by zinc. In terms of biological role, protease that can cleave T7 RNA polymerase, ferric enterobactin receptor protein (FEP), antimicrobial peptide protamine and other proteins. This protease has a specificity for paired basic residues. The chain is Protease 7 (ompT) from Escherichia coli O157:H7.